The chain runs to 217 residues: 3,4-dihydroxy-2-butanone 4-phosphate synthase (217 aa).

D-ribulose 5-phosphate contacts are provided by residues 37–38, Asp42, 150–154, and Glu174; these read RE and RGGHT. Glu38 lines the Mg(2+) pocket. Position 153 (His153) interacts with Mg(2+).

Belongs to the DHBP synthase family. Homodimer. It depends on Mg(2+) as a cofactor. Mn(2+) serves as cofactor.

The enzyme catalyses D-ribulose 5-phosphate = (2S)-2-hydroxy-3-oxobutyl phosphate + formate + H(+). The protein operates within cofactor biosynthesis; riboflavin biosynthesis; 2-hydroxy-3-oxobutyl phosphate from D-ribulose 5-phosphate: step 1/1. Functionally, catalyzes the conversion of D-ribulose 5-phosphate to formate and 3,4-dihydroxy-2-butanone 4-phosphate. This is 3,4-dihydroxy-2-butanone 4-phosphate synthase from Proteus mirabilis (strain HI4320).